Here is a 97-residue protein sequence, read N- to C-terminus: Small ribosomal subunit protein bS20 (97 aa).

The segment covering arginine 76 to glycine 85 has biased composition (basic residues). The tract at residues arginine 76 to serine 97 is disordered. Residues leucine 86–serine 97 are compositionally biased toward low complexity.

It belongs to the bacterial ribosomal protein bS20 family.

Binds directly to 16S ribosomal RNA. The sequence is that of Small ribosomal subunit protein bS20 from Microcystis aeruginosa (strain NIES-843 / IAM M-2473).